Here is an 869-residue protein sequence, read N- to C-terminus: H(+)/Cl(-) exchange transporter 6 (869 aa).

Topologically, residues 1–80 are cytoplasmic; sequence MAGCRGSLCC…KKGRWYEVVK (80 aa). The next 2 helical transmembrane spans lie at 81 to 113 and 128 to 150; these read WTVVFAIGVCTGLVGLFVDFFVQLFTQLKFGVV and LSLLELLGFNLTFVFLASLLVLI. A Selectivity filter part_1 motif is present at residues 156 to 160; the sequence is GSGIP. Chloride is bound at residue S157. Positions 159–166 form an intramembrane region, helical; it reads IPEIKCYL. A run of 2 helical transmembrane segments spans residues 176–194 and 200–217; these read RLRTLLCKVFGVLFSVAGG and EGPMIHSGAVVGAGLPQF. The Selectivity filter part_2 signature appears at 198–202; sequence GKEGP. Intramembrane regions (helical) lie at residues 241–253 and 257–265; these read FVSAGAAAGIAAA and PIGATLFSL. A run of 3 helical transmembrane segments spans residues 277-294, 335-364, and 371-392; these read TWKVLFCSMSATFTLNFF, GFFVVMGVIGGLLGATFNCLNKRLAKYRMR, and KLVRVLESLLVSLVTTLVVFVA. Residues N410, N422, and N432 are each glycosylated (N-linked (GlcNAc...) asparagine). 2 helical membrane-spanning segments follow: residues 462–481 and 487–511; these read PITLALFFVLYFLLACWTYG and GLFVPSLLCGAAFGRLVANVLKSYI. The Selectivity filter part_3 motif lies at 487–491; sequence GLFVP. Chloride is bound at residue F489. The segment at residues 519–533 is an intramembrane region (helical); it reads GTFSLIGAAALLGGV. The segment at residues 534 to 536 is an intramembrane region (note=Loop between two helices); it reads VRM. The helical intramembrane region spans 537–548; that stretch reads TISLTVILIEST. The note=Loop between two helices intramembrane region spans 549-552; sequence NEIT. Residues 553–571 traverse the membrane as a helical segment; it reads YGLPIMITLMVAKWTGDFF. Over 572 to 869 the chain is Cytoplasmic; it reads NKGIYDIHVG…ARLRQHYQTI (298 aa). Chloride is bound at residue Y576. A CBS 1 domain is found at 605-662; that stretch reads MEPNLTYVYPHTRIQSLVSILRTTVHHAFPVVTENRGNEKEFMKGNQLISNNIKFKKS. ATP is bound at residue 630-632; that stretch reads HHA. The interval 668-687 is disordered; the sequence is AGEQRRRSQSMKSYPSSELR. A compositionally biased stretch (polar residues) spans 677–686; the sequence is SMKSYPSSEL. The residue at position 773 (S773) is a Phosphoserine. One can recognise a CBS 2 domain in the interval 807–868; sequence MNPSPFTVSP…QARLRQHYQT (62 aa). 849 to 852 contacts ATP; that stretch reads TRHN.

This sequence belongs to the chloride channel (TC 2.A.49) family. ClC-6/CLCN6 subfamily. In terms of processing, N-glycosylated on several asparagine residues.

The protein resides in the late endosome membrane. The enzyme catalyses 2 chloride(in) + H(+)(out) = 2 chloride(out) + H(+)(in). Its function is as follows. Voltage-gated channel mediating the exchange of chloride ions against protons. Functions as antiporter and contributes to the acidification of the late endosome lumen. The CLC channel family contains both chloride channels and proton-coupled anion transporters that exchange chloride or another anion for protons. The presence of conserved gating glutamate residues is typical for family members that function as antiporters. The polypeptide is H(+)/Cl(-) exchange transporter 6 (CLCN6) (Oryctolagus cuniculus (Rabbit)).